The following is a 319-amino-acid chain: D-alanine--D-alanine ligase B (319 aa).

An ATP-grasp domain is found at 117–312; the sequence is KRVWLSLGLP…FQQLVLAILA (196 aa). Residue 143–198 participates in ATP binding; it reads AQRLGFPLIVKPAHEGSSIGMAKVGGLDELIAAWREAARYDSQVLVEQWISGPEFT. Residues Asp-266, Glu-279, and Asn-281 each coordinate Mg(2+).

The protein belongs to the D-alanine--D-alanine ligase family. It depends on Mg(2+) as a cofactor. Mn(2+) is required as a cofactor.

It localises to the cytoplasm. The catalysed reaction is 2 D-alanine + ATP = D-alanyl-D-alanine + ADP + phosphate + H(+). Its pathway is cell wall biogenesis; peptidoglycan biosynthesis. Functionally, cell wall formation. This Pseudomonas aeruginosa (strain ATCC 15692 / DSM 22644 / CIP 104116 / JCM 14847 / LMG 12228 / 1C / PRS 101 / PAO1) protein is D-alanine--D-alanine ligase B.